The chain runs to 171 residues: Myelin basic protein (171 aa).

The residue at position 1 (Ala1) is an N-acetylalanine. Residues Ser7 and Ser12 each carry the phosphoserine modification. Tyr14 bears the Phosphotyrosine mark. Thr17 carries the phosphothreonine modification. Ser19 carries the phosphoserine modification. Phosphothreonine is present on Thr20. 2 positions are modified to citrulline: Arg25 and Arg31. Phosphothreonine is present on Thr35. Ser40 carries the post-translational modification Phosphoserine. An omega-N-methylarginine mark is found at Arg43 and Arg49. The disordered stretch occupies residues 44–115; the sequence is FFGGDRGAPK…GRGLSLSRFS (72 aa). Ser56 is subject to Phosphoserine. Residue Tyr69 is modified to Phosphotyrosine. Position 76 is a phosphoserine (Ser76). Phosphothreonine is present on residues Thr80, Thr95, and Thr98. Gln103 is subject to Deamidated glutamine. At Arg107 the chain carries Omega-N-methylarginine; alternate. Arg107 carries the post-translational modification Symmetric dimethylarginine; alternate. Residue Ser115 is modified to Phosphoserine. Arg122 and Arg130 each carry citrulline. Gln148 is modified (deamidated glutamine). At Arg160 the chain carries Citrulline. Position 162 is a phosphoserine (Ser162). Ser166 bears the Phosphoserine; by UHMK1 mark. Residue Arg171 is modified to Citrulline.

The protein belongs to the myelin basic protein family. As to quaternary structure, homodimer. In terms of processing, as in other animals, several charge isomers may be produced as a result of optional post-translational modifications, such as phosphorylation of serine or threonine residues, deamidation of glutamine or asparagine residues, citrullination and methylation of arginine residues. Post-translationally, phosphorylated by TAOK2, VRK2, MAPK11, MAPK12, MAPK14 and MINK1. Proteolytically cleaved in B cell lysosomes by cathepsin CTSG which degrades the major immunogenic MBP epitope and prevents the activation of MBP-specific autoreactive T cells.

The protein localises to the myelin membrane. In terms of biological role, is, with PLP, the most abundant protein component of the myelin membrane in the CNS. Has a role in both the formation and stabilization of this compact multilayer arrangement of bilayers. Each splice variant and charge isomer may have a specialized function in the assembly of an optimized, biochemically functional myelin membrane. The protein is Myelin basic protein (MBP) of Pan troglodytes (Chimpanzee).